Consider the following 64-residue polypeptide: Large ribosomal subunit protein bL33c (64 aa).

Belongs to the bacterial ribosomal protein bL33 family.

The protein localises to the plastid. It localises to the chloroplast. This is Large ribosomal subunit protein bL33c from Phaeodactylum tricornutum (strain CCAP 1055/1).